The chain runs to 579 residues: Rho guanine nucleotide exchange factor 25 (579 aa).

2 disordered regions span residues 27-61 (AVPGQEGPQERDPLGPGSTKTESECTEEDQTGERE) and 172-194 (VKAQPAEEETLSQAPKNEEEQKK). The DH domain maps to 199–375 (RSMFVLSELV…CFVPKRCNDM (177 aa)). Residues 317-338 (LGHRLQLSDLLIKPVQRIMKYQ) form an important for binding to Rho GTPases region. One can recognise a PH domain in the interval 380-499 (RLRGFEGKLT…ESQTNSLGRS (120 aa)). Residues 472 to 498 (SQRDFLNALQSPIEYQRRESQTNSLGR) are sufficient to bind activated GNAQ. Disordered stretches follow at residues 487–516 (QRRESQTNSLGRSGGPGVGSPGRMAQVSMH) and 546–579 (LSETPLTPYDPPALPTVNSPPGQARLAKLDEDEL).

In terms of assembly, interacts with activated GNAQ and GNA11. Interacts with RHOA, CDC42 and RAC1. Interacts (via the DH domain) with POPDC1 (via the C-terminus cytoplasmic tail).

The protein resides in the cytoplasm. It is found in the myofibril. It localises to the sarcomere. Its subcellular location is the cell membrane. May play a role in actin cytoskeleton reorganization in different tissues since its activation induces formation of actin stress fibers. It works as a guanine nucleotide exchange factor for Rho family of small GTPases. Links specifically G alpha q/11-coupled receptors to RHOA activation. May be an important regulator of processes involved in axon and dendrite formation. In neurons seems to be an exchange factor primarily for RAC1. Involved in skeletal myogenesis. The polypeptide is Rho guanine nucleotide exchange factor 25 (Arhgef25) (Rattus norvegicus (Rat)).